A 317-amino-acid polypeptide reads, in one-letter code: Melanocyte-stimulating hormone receptor (317 aa).

At 1 to 37 (MPMQGAQKRLLGSLNSTPTATPNLGLAANHTGAPCLE) the chain is on the extracellular side. A glycan (N-linked (GlcNAc...) asparagine) is linked at asparagine 29. The helical transmembrane segment at 38–63 (VSIPDGLFLSLGLVSLVENVLVVAAI) threads the bilayer. Residues 64 to 72 (AKNRNLHSP) lie on the Cytoplasmic side of the membrane. The helical transmembrane segment at 73 to 93 (MYCFICCLALSDLLVSSSNML) threads the bilayer. The Extracellular portion of the chain corresponds to 94–118 (ETAVILLLEAGALATRASVVQQLQN). Residues 119–140 (TIDVLTCSSMLCSLCFLGAIAV) traverse the membrane as a helical segment. The Cytoplasmic segment spans residues 141–163 (DRHVSIFYALRYHSIMTLARARR). Residues 164-183 (AIAAIWVASVLSSTLFIAYC) form a helical membrane-spanning segment. The Extracellular portion of the chain corresponds to 184–191 (DHAXVLLC). The helical transmembrane segment at 192–211 (LVVFFLAMLVLMAVLYVHML) threads the bilayer. At 212-240 (ARACQHAQGITRLHQRQPPAHQGFGFRGA) the chain is on the cytoplasmic side. Residues 241-266 (ATLTILLGIFFLCWGPFFLHLTLVVL) traverse the membrane as a helical segment. Residues 267 to 279 (CPQHLTCSCIFKN) lie on the Extracellular side of the membrane. Residues 280–300 (FKVFLTLIICSTIIDPLIYAF) form a helical membrane-spanning segment. Residues 301 to 317 (RSQELRRTLKELLLCSW) are Cytoplasmic-facing. Cysteine 315 is lipidated: S-palmitoyl cysteine.

The protein belongs to the G-protein coupled receptor 1 family. In terms of assembly, interacts with MGRN1, but does not undergo MGRN1-mediated ubiquitination; this interaction competes with GNAS-binding and thus inhibits agonist-induced cAMP production. Interacts with OPN3; the interaction results in a decrease in MC1R-mediated cAMP signaling and ultimately a decrease in melanin production in melanocytes.

It localises to the cell membrane. Functionally, receptor for MSH (alpha, beta and gamma) and ACTH. The activity of this receptor is mediated by G proteins which activate adenylate cyclase. Mediates melanogenesis, the production of eumelanin (black/brown) and phaeomelanin (red/yellow), via regulation of cAMP signaling in melanocytes. The protein is Melanocyte-stimulating hormone receptor (MC1R) of Ateles paniscus (Black spider monkey).